We begin with the raw amino-acid sequence, 130 residues long: Small ribosomal subunit protein uS9 (130 aa).

It belongs to the universal ribosomal protein uS9 family.

This chain is Small ribosomal subunit protein uS9, found in Herminiimonas arsenicoxydans.